Reading from the N-terminus, the 365-residue chain is Histidinol-phosphate aminotransferase 2 (365 aa).

An N6-(pyridoxal phosphate)lysine modification is found at K222.

Belongs to the class-II pyridoxal-phosphate-dependent aminotransferase family. Histidinol-phosphate aminotransferase subfamily. As to quaternary structure, homodimer. Pyridoxal 5'-phosphate is required as a cofactor.

The catalysed reaction is L-histidinol phosphate + 2-oxoglutarate = 3-(imidazol-4-yl)-2-oxopropyl phosphate + L-glutamate. Its pathway is amino-acid biosynthesis; L-histidine biosynthesis; L-histidine from 5-phospho-alpha-D-ribose 1-diphosphate: step 7/9. This is Histidinol-phosphate aminotransferase 2 (hisC2) from Bordetella bronchiseptica (strain ATCC BAA-588 / NCTC 13252 / RB50) (Alcaligenes bronchisepticus).